The sequence spans 283 residues: NADH-ubiquinone oxidoreductase 30.4 kDa subunit, mitochondrial (283 aa).

A mitochondrion-targeting transit peptide spans 1–17 (MASKLCRSRALASALRS). Residues 258-283 (GAGIDRKPESFKLPTPKPETKPEEKK) form a disordered region.

It belongs to the complex I 30 kDa subunit family. Complex I is composed of about 40 different subunits. This is a component of the iron-sulfur protein fraction.

The protein resides in the mitochondrion inner membrane. It catalyses the reaction a ubiquinone + NADH + 5 H(+)(in) = a ubiquinol + NAD(+) + 4 H(+)(out). Its function is as follows. Core subunit of the mitochondrial membrane respiratory chain NADH dehydrogenase (Complex I) that is believed to belong to the minimal assembly required for catalysis. Complex I functions in the transfer of electrons from NADH to the respiratory chain. The immediate electron acceptor for the enzyme is believed to be ubiquinone. The protein is NADH-ubiquinone oxidoreductase 30.4 kDa subunit, mitochondrial (nuo-31) of Neurospora crassa (strain ATCC 24698 / 74-OR23-1A / CBS 708.71 / DSM 1257 / FGSC 987).